We begin with the raw amino-acid sequence, 167 residues long: Photosystem I assembly protein Ycf3 (167 aa).

3 TPR repeats span residues 35-68 (AFSY…ETDA), 72-105 (SYIL…NPSL), and 120-153 (GEQA…APTN).

Belongs to the Ycf3 family.

It is found in the plastid. It localises to the chloroplast thylakoid membrane. Essential for the assembly of the photosystem I (PSI) complex. May act as a chaperone-like factor to guide the assembly of the PSI subunits. The sequence is that of Photosystem I assembly protein Ycf3 from Chlorella vulgaris (Green alga).